Consider the following 157-residue polypeptide: uncharacterized protein (157 aa).

The N-terminal stretch at 1 to 23 (MEALRRAHEATLRLLLCRPWASG) is a signal peptide.

The protein resides in the secreted. This is an uncharacterized protein from Mus musculus (Mouse).